We begin with the raw amino-acid sequence, 316 residues long: Malate dehydrogenase 2 (316 aa).

Residues 10–15 (GGGQIG) and aspartate 34 each bind NAD(+). 2 residues coordinate substrate: arginine 83 and arginine 89. Residues asparagine 96 and 119 to 121 (ISN) contribute to the NAD(+) site. Residues asparagine 121 and arginine 152 each contribute to the substrate site. The active-site Proton acceptor is histidine 176.

Belongs to the LDH/MDH superfamily. MDH type 3 family.

The enzyme catalyses (S)-malate + NAD(+) = oxaloacetate + NADH + H(+). Catalyzes the reversible oxidation of malate to oxaloacetate. The sequence is that of Malate dehydrogenase 2 from Anaeromyxobacter dehalogenans (strain 2CP-C).